An 817-amino-acid polypeptide reads, in one-letter code: Protein EFR3 homolog B (817 aa).

Phosphoserine is present on residues S212, S214, and S216.

The protein belongs to the EFR3 family. As to quaternary structure, component of a phosphatidylinositol 4-kinase (PI4K) complex, composed of PI4KA, EFR3 (EFR3A or EFR3B), TTC7 (TTC7A or TTC7B) and HYCC (HYCC1 or HYCC2). Post-translationally, palmitoylated at its N-terminus, anchoring the protein to the plasma membrane.

It is found in the cell membrane. The protein localises to the cytoplasm. The protein resides in the cytosol. In terms of biological role, component of a complex required to localize phosphatidylinositol 4-kinase (PI4K) to the plasma membrane. The complex acts as a regulator of phosphatidylinositol 4-phosphate (PtdIns(4)P) synthesis. In the complex, EFR3B probably acts as the membrane-anchoring component. Also involved in responsiveness to G-protein-coupled receptors; it is however unclear whether this role is direct or indirect. The sequence is that of Protein EFR3 homolog B from Homo sapiens (Human).